A 272-amino-acid chain; its full sequence is Indole-3-glycerol phosphate synthase (272 aa).

This sequence belongs to the TrpC family.

The catalysed reaction is 1-(2-carboxyphenylamino)-1-deoxy-D-ribulose 5-phosphate + H(+) = (1S,2R)-1-C-(indol-3-yl)glycerol 3-phosphate + CO2 + H2O. It participates in amino-acid biosynthesis; L-tryptophan biosynthesis; L-tryptophan from chorismate: step 4/5. The polypeptide is Indole-3-glycerol phosphate synthase (Arthrobacter sp. (strain FB24)).